Here is a 307-residue protein sequence, read N- to C-terminus: MLKGRNLLDPMDFSLEELEGVFKLADEIIESPEKFLHVCDGKILATLFYEPSTRTRFSFEAAMLRLGGQVIGFSEPNSSSVAKGESVADTIRTVGCYADIAAMRHPKEGAPAIAAMYSEIPVINAGDGSHQHPTQTLTDLLTIRSLKGDLSNLTIGCCGDLKFGRTVHSLVKALSRYKNNKFVFMSPEELKIPDYIRKEILEKNNIEYKEVSKMEDAMAELDILYMTRVQRERFFNEDDYVRLKDSYILDGEKMKYAKKDMMVLHPLPRVNEIAYEIDQDPRGCYFKQAKYGMYVRMALIAKLLGVR.

2 residues coordinate carbamoyl phosphate: R54 and T55. Residue K83 coordinates L-aspartate. R104, H132, and Q135 together coordinate carbamoyl phosphate. L-aspartate-binding residues include R165 and R228. L267 and P268 together coordinate carbamoyl phosphate.

Belongs to the aspartate/ornithine carbamoyltransferase superfamily. ATCase family. In terms of assembly, heterododecamer (2C3:3R2) of six catalytic PyrB chains organized as two trimers (C3), and six regulatory PyrI chains organized as three dimers (R2).

It carries out the reaction carbamoyl phosphate + L-aspartate = N-carbamoyl-L-aspartate + phosphate + H(+). It functions in the pathway pyrimidine metabolism; UMP biosynthesis via de novo pathway; (S)-dihydroorotate from bicarbonate: step 2/3. Functionally, catalyzes the condensation of carbamoyl phosphate and aspartate to form carbamoyl aspartate and inorganic phosphate, the committed step in the de novo pyrimidine nucleotide biosynthesis pathway. This chain is Aspartate carbamoyltransferase catalytic subunit, found in Clostridium botulinum (strain Loch Maree / Type A3).